Consider the following 466-residue polypeptide: ATP synthase subunit beta (466 aa).

155–162 contributes to the ATP binding site; that stretch reads GGAGVGKT.

It belongs to the ATPase alpha/beta chains family. As to quaternary structure, F-type ATPases have 2 components, CF(1) - the catalytic core - and CF(0) - the membrane proton channel. CF(1) has five subunits: alpha(3), beta(3), gamma(1), delta(1), epsilon(1). CF(0) has three main subunits: a(1), b(2) and c(9-12). The alpha and beta chains form an alternating ring which encloses part of the gamma chain. CF(1) is attached to CF(0) by a central stalk formed by the gamma and epsilon chains, while a peripheral stalk is formed by the delta and b chains.

It localises to the cell inner membrane. The enzyme catalyses ATP + H2O + 4 H(+)(in) = ADP + phosphate + 5 H(+)(out). In terms of biological role, produces ATP from ADP in the presence of a proton gradient across the membrane. The catalytic sites are hosted primarily by the beta subunits. The sequence is that of ATP synthase subunit beta from Bordetella petrii (strain ATCC BAA-461 / DSM 12804 / CCUG 43448).